The sequence spans 180 residues: ATP-dependent protease subunit HslV (180 aa).

Residue T7 is part of the active site. Na(+)-binding residues include G165, C168, and T171.

It belongs to the peptidase T1B family. HslV subfamily. A double ring-shaped homohexamer of HslV is capped on each side by a ring-shaped HslU homohexamer. The assembly of the HslU/HslV complex is dependent on binding of ATP.

It localises to the cytoplasm. It catalyses the reaction ATP-dependent cleavage of peptide bonds with broad specificity.. With respect to regulation, allosterically activated by HslU binding. Its function is as follows. Protease subunit of a proteasome-like degradation complex believed to be a general protein degrading machinery. In Bacillus cytotoxicus (strain DSM 22905 / CIP 110041 / 391-98 / NVH 391-98), this protein is ATP-dependent protease subunit HslV.